Consider the following 493-residue polypeptide: Phospholipid transfer protein (493 aa).

The N-terminal stretch at 1-17 (MVLLWALFLALLAGAHA) is a signal peptide. N64, N91, N94, N117, and N143 each carry an N-linked (GlcNAc...) asparagine glycan. Cysteines 146 and 185 form a disulfide. N-linked (GlcNAc...) asparagine glycosylation is found at N245 and N398.

It belongs to the BPI/LBP/Plunc superfamily. BPI/LBP family. In terms of processing, glycosylation is necessary for secretion and its phospholipid transfer activity. Highest level expression in the lung, brain and heart with relatively low levels in the liver, skeletal muscle and testis and very low levels found in the spleen and kidney.

The protein resides in the secreted. The protein localises to the nucleus. It carries out the reaction a 1,2-diacyl-sn-glycero-3-phosphocholine(in) = a 1,2-diacyl-sn-glycero-3-phosphocholine(out). The catalysed reaction is a 1,2-diacyl-sn-glycero-3-phosphoethanolamine(in) = a 1,2-diacyl-sn-glycero-3-phosphoethanolamine(out). The enzyme catalyses a 1,2-diacyl-sn-glycerol(in) = a 1,2-diacyl-sn-glycerol(out). It catalyses the reaction a 1,2-diacyl-sn-glycero-3-phosphate(in) = a 1,2-diacyl-sn-glycero-3-phosphate(out). It carries out the reaction a sphingomyelin(in) = a sphingomyelin(out). The catalysed reaction is a 1,2-diacyl-sn-glycero-3-phospho-(1'-sn-glycerol)(in) = a 1,2-diacyl-sn-glycero-3-phospho-(1'-sn-glycerol)(out). The enzyme catalyses a 1,2-diacyl-sn-glycero-3-phospho-(1D-myo-inositol)(in) = a 1,2-diacyl-sn-glycero-3-phospho-(1D-myo-inositol)(out). It catalyses the reaction 1-hexadecanoyl-2-(5Z,8Z,11Z,14Z-eicosatetraenoyl)-sn-glycero-3-phosphoethanolamine(in) = 1-hexadecanoyl-2-(5Z,8Z,11Z,14Z-eicosatetraenoyl)-sn-glycero-3-phosphoethanolamine(out). It carries out the reaction N-(hexadecanoyl)-sphing-4-enine-1-phosphocholine(in) = N-(hexadecanoyl)-sphing-4-enine-1-phosphocholine(out). The catalysed reaction is 1,2-dihexadecanoyl-sn-glycero-3-phosphocholine(in) = 1,2-dihexadecanoyl-sn-glycero-3-phosphocholine(out). Functionally, mediates the transfer of phospholipids and free cholesterol from triglyceride-rich lipoproteins (low density lipoproteins or LDL and very low density lipoproteins or VLDL) into high-density lipoproteins (HDL) as well as the exchange of phospholipids between triglyceride-rich lipoproteins themselves. Facilitates the transfer of a spectrum of different lipid molecules, including sphingomyelin, phosphatidylcholine, phosphatidylinositol, phosphatidylglycerol, and phosphatidyl ethanolamine. Plays an important role in HDL remodeling which involves modulating the size and composition of HDL. Also plays a key role in the uptake of cholesterol from peripheral cells and tissues that is subsequently transported to the liver for degradation and excretion. Two distinct forms of PLTP exist in plasma: an active form that can transfer phosphatidylcholine from phospholipid vesicles to HDL, and an inactive form that lacks this capability. The polypeptide is Phospholipid transfer protein (Pltp) (Mus musculus (Mouse)).